A 119-amino-acid chain; its full sequence is Large ribosomal subunit protein bL20 (119 aa).

Belongs to the bacterial ribosomal protein bL20 family.

Binds directly to 23S ribosomal RNA and is necessary for the in vitro assembly process of the 50S ribosomal subunit. It is not involved in the protein synthesizing functions of that subunit. This chain is Large ribosomal subunit protein bL20, found in Clostridium tetani (strain Massachusetts / E88).